The sequence spans 447 residues: Glutamate--tRNA ligase 1 (447 aa).

Residues 10 to 20 (PSPTGMLHVGN) carry the 'HIGH' region motif. The 'KMSKS' region signature appears at 240–244 (KISKR). Position 243 (Lys243) interacts with ATP.

The protein belongs to the class-I aminoacyl-tRNA synthetase family. Glutamate--tRNA ligase type 1 subfamily. In terms of assembly, monomer.

Its subcellular location is the cytoplasm. It catalyses the reaction tRNA(Glu) + L-glutamate + ATP = L-glutamyl-tRNA(Glu) + AMP + diphosphate. Catalyzes the attachment of glutamate to tRNA(Glu) in a two-step reaction: glutamate is first activated by ATP to form Glu-AMP and then transferred to the acceptor end of tRNA(Glu). This Rickettsia rickettsii (strain Sheila Smith) protein is Glutamate--tRNA ligase 1.